Consider the following 219-residue polypeptide: Ribonuclease HII (219 aa).

Positions 10 to 219 (HLEAGTDEAG…LLPEQTVLDL (210 aa)) constitute an RNase H type-2 domain. Positions 16, 17, and 108 each coordinate a divalent metal cation.

It belongs to the RNase HII family. The cofactor is Mn(2+). Mg(2+) is required as a cofactor.

The protein resides in the cytoplasm. It carries out the reaction Endonucleolytic cleavage to 5'-phosphomonoester.. Endonuclease that specifically degrades the RNA of RNA-DNA hybrids. The protein is Ribonuclease HII of Flavobacterium psychrophilum (strain ATCC 49511 / DSM 21280 / CIP 103535 / JIP02/86).